Reading from the N-terminus, the 396-residue chain is MSISTLQKEINKQLDGCFEEMVEIRRHFHMYPELSFQEEKTAAFIASYYESLGVPIRTNVGGRGVLANIEGSEPGPTVALRADFDALPIQDEKDVPYASKVPGVMHACGHDGHTAALLAVAKVLHQNRHELKGTFVMIHQHAEEYYPGGAKPMIDDGCLENTDVIFGTHLWATEPLGTILCRPGAVMAAADRFTIKVFGKGGHGAHPHDTKDAVLIGSQIVSSLQHIVSRKVNPIQSAVISTGSFIADNPFNVIADQAVLIGTARSFDENVRDILEKEIEAVVKGICSMHGASYEYTYEQGYPAVVNHPAETNHLVSTAKNTEGVQQVIDGEPQMGGEDFAYYLQNVKGTFFFTGAAPEQPERVYSHHHPKFDINEKAMLTAAKVLAGAAITYHQL.

Asp85 is an active-site residue. Glu143 serves as the catalytic Proton acceptor. Residues Glu144, Arg182, and His368 each contribute to the Zn(2+) site.

Belongs to the peptidase M20A family. The cofactor is Zn(2+). Co(2+) serves as cofactor.

The sequence is that of Putative amidohydrolase YhaA (yhaA) from Bacillus subtilis (strain 168).